Reading from the N-terminus, the 371-residue chain is MNNWKRIVVKVGTSSITDGRGSPSGEKILSLVKECVKLIRADKELVLVSSGAIASGREIIQKLSKRKDLPAKQALSAVGQVRLMQYYSQLFSIFKQPIAQILLTAEDLRDRKRYINISQTFETLLEEKIIPIVNENDTVAVEEIKIGDNDTLSAKVACAINADLLVILSDVEGLYSEDPNISSNALLITDVYEIDESIEKIAGPGKGTGGMFTKVQAAKIVTEAGIPMILARADVENILERIVLKKEKVGTFFYPSEKHLNKRKHWMLFMAKPEGRIYIDDGAKDALLKRGKSLLPVGIKKVEGEFTRGDTVSIFDLRGEEIARGITNYDSLELDKIKGKNTEEIRNILGEDFYEEVIHRNNLVLTNRGDL.

Lys-10 lines the ATP pocket. Substrate contacts are provided by Ser-50, Asp-137, and Asn-149. ATP is bound by residues 169–170 and 208–214; these read SD and TGGMFTK. Positions 274–352 constitute a PUA domain; that stretch reads EGRIYIDDGA…EEIRNILGED (79 aa).

The protein belongs to the glutamate 5-kinase family.

The protein localises to the cytoplasm. The catalysed reaction is L-glutamate + ATP = L-glutamyl 5-phosphate + ADP. The protein operates within amino-acid biosynthesis; L-proline biosynthesis; L-glutamate 5-semialdehyde from L-glutamate: step 1/2. In terms of biological role, catalyzes the transfer of a phosphate group to glutamate to form L-glutamate 5-phosphate. In Dictyoglomus turgidum (strain DSM 6724 / Z-1310), this protein is Glutamate 5-kinase.